The chain runs to 352 residues: (2E,6E)-farnesyl diphosphate synthase (352 aa).

Residues Lys43, Arg46, and His77 each coordinate isopentenyl diphosphate. Mg(2+) contacts are provided by Asp84 and Asp88. The DDXXD motif motif lies at 84–88 (DDLID). Arg94 lines the isopentenyl diphosphate pocket. Positions 236–240 (DDVLG) match the DDXXD motif motif.

The protein belongs to the FPP/GGPP synthase family. The cofactor is Mg(2+).

It carries out the reaction isopentenyl diphosphate + dimethylallyl diphosphate = (2E)-geranyl diphosphate + diphosphate. It catalyses the reaction isopentenyl diphosphate + (2E)-geranyl diphosphate = (2E,6E)-farnesyl diphosphate + diphosphate. The protein operates within isoprenoid biosynthesis; geranyl diphosphate biosynthesis; geranyl diphosphate from dimethylallyl diphosphate and isopentenyl diphosphate: step 1/1. It functions in the pathway isoprenoid biosynthesis; farnesyl diphosphate biosynthesis; farnesyl diphosphate from geranyl diphosphate and isopentenyl diphosphate. Its function is as follows. Catalyzes the sequential condensations of isopentenyl pyrophosphate (IPP) with dimethylallyl diphosphate (DMAPP) to yield geranyl diphosphate (GPP) and with GPP to yield (2E,6E)-farnesyl diphosphate (E,E-FPP). The protein is (2E,6E)-farnesyl diphosphate synthase of Mycobacterium tuberculosis (strain ATCC 25618 / H37Rv).